Reading from the N-terminus, the 340-residue chain is GTPase Obg (340 aa).

The 159-residue stretch at 1–159 (MDFIDEVKLY…KYVVLKLKVL (159 aa)) folds into the Obg domain. The OBG-type G domain occupies 160 to 329 (SDVGIIGMPN…LNEKLKKGSS (170 aa)). GTP is bound by residues 166 to 173 (GMPNAGKS), 191 to 195 (FTTIK), 212 to 215 (DIPG), 279 to 282 (NKCD), and 310 to 312 (GED). Residues Ser-173 and Thr-193 each coordinate Mg(2+).

This sequence belongs to the TRAFAC class OBG-HflX-like GTPase superfamily. OBG GTPase family. In terms of assembly, monomer. Mg(2+) is required as a cofactor.

The protein resides in the cytoplasm. In terms of biological role, an essential GTPase which binds GTP, GDP and possibly (p)ppGpp with moderate affinity, with high nucleotide exchange rates and a fairly low GTP hydrolysis rate. Plays a role in control of the cell cycle, stress response, ribosome biogenesis and in those bacteria that undergo differentiation, in morphogenesis control. This Wolbachia sp. subsp. Brugia malayi (strain TRS) protein is GTPase Obg.